Consider the following 851-residue polypeptide: Glutathione transporter 1 (851 aa).

A compositionally biased stretch (polar residues) spans 1 to 14; that stretch reads MTARNSASIPTSIR. Residues 1-116 are disordered; that stretch reads MTARNSASIP…LDNETDSEVE (116 aa). A glycan (N-linked (GlcNAc...) asparagine) is linked at asparagine 32. Positions 33–68 are enriched in low complexity; the sequence is LSTKTASKTSLTFRQSSSDESTSSYSGNHHNINIQH. Over residues 74–92 the composition is skewed to polar residues; that stretch reads FRTNSSSFSPNDYSISESP. Asparagine 77 carries N-linked (GlcNAc...) asparagine glycosylation. Serine 93 bears the Phosphoserine mark. A coiled-coil region spans residues 105-134; sequence VQLDNETDSEVESEVEELERELEAIEDSVY. The N-linked (GlcNAc...) asparagine glycan is linked to asparagine 109. 2 helical membrane passes run 156–176 and 179–199; these read TWVLTTIFVIVFAAVNQFFSL and PALSISFIVAQLILFPLGKLL. An N-linked (GlcNAc...) asparagine glycan is attached at asparagine 256. The next 4 membrane-spanning stretches (helical) occupy residues 259-279, 282-302, 333-353, and 405-425; these read WGYKILIVLTSQMLGYGFAGL, RWIVYPAAMIWPQTLVSTVLF, FFAYVMIGSFVFYWFPGFIFK, and WVICNTFGSVVLIFWIVVPIL. Residues asparagine 452 and asparagine 464 are each glycosylated (N-linked (GlcNAc...) asparagine). 5 helical membrane-spanning segments follow: residues 480–500, 531–551, 560–580, 592–612, and 642–662; these read YSMSTALNFAAVTAIFTHCAL, APQWWYATLFIVVFGLTIFTV, VWALIVALLIFIVNFIPQGVL, IITELIGGYILPGKPLANLMI, and ILFFVQLFATILGGITQVAVQ. Asparagine 691 carries an N-linked (GlcNAc...) asparagine glycan. A run of 3 helical transmembrane segments spans residues 711 to 731, 757 to 777, and 791 to 811; these read YYPLIFFFLIGAVAPFITWGL, PATGINYSSWAIVGFIFNYVI, and VLAAAMDSGVAVAGVVIFLCV. The N-linked (GlcNAc...) asparagine glycan is linked to asparagine 843.

The protein belongs to the oligopeptide OPT transporter family.

Its subcellular location is the endoplasmic reticulum membrane. It localises to the cell membrane. High-affinity glutathione transporter which plays a role in scavenging glutathione from the extracellular environment for the maintenance of sulfur homeostasis. In Schizosaccharomyces pombe (strain 972 / ATCC 24843) (Fission yeast), this protein is Glutathione transporter 1 (pgt1).